Consider the following 327-residue polypeptide: Phenylalanine--tRNA ligase alpha subunit (327 aa).

Residue E252 participates in Mg(2+) binding.

It belongs to the class-II aminoacyl-tRNA synthetase family. Phe-tRNA synthetase alpha subunit type 1 subfamily. As to quaternary structure, tetramer of two alpha and two beta subunits. The cofactor is Mg(2+).

The protein localises to the cytoplasm. The catalysed reaction is tRNA(Phe) + L-phenylalanine + ATP = L-phenylalanyl-tRNA(Phe) + AMP + diphosphate + H(+). In Klebsiella pneumoniae (strain 342), this protein is Phenylalanine--tRNA ligase alpha subunit.